The sequence spans 343 residues: uncharacterized protein (343 aa).

Position 33–40 (33–40 (GPKSSGKS)) interacts with ATP.

It belongs to the archaeal ATPase family.

This is an uncharacterized protein from Methanocaldococcus jannaschii (strain ATCC 43067 / DSM 2661 / JAL-1 / JCM 10045 / NBRC 100440) (Methanococcus jannaschii).